Here is a 199-residue protein sequence, read N- to C-terminus: Golgi to ER traffic protein 1 (199 aa).

Residues 1-11 (MLLPDLHPYTI) are Lumenal-facing. The chain crosses the membrane as a helical span at residues 12–31 (LLSIFLVLVVKQLVATIGKS). The Cytoplasmic portion of the chain corresponds to 32-115 (TIQEFVWLVY…SIDKASNALI (84 aa)). Residues 76-116 (YAKWTKLNRQADKLSAELQKLNQEIQQQKSSIDKASNALIL) adopt a coiled-coil conformation. Residues 116 to 136 (LVLTTLPIWIARVFYRKTHLF) form a helical membrane-spanning segment. Topologically, residues 137 to 160 (YIRQGIFPKYVEWVLALPFLPNGA) are lumenal. A helical membrane pass occupies residues 161–177 (VGLTIWMFAVNSVVSNF). The Cytoplasmic portion of the chain corresponds to 178-199 (SFLVSFPFAKRVSKPVRDTKVE).

The protein belongs to the WRB/GET1 family. As to quaternary structure, component of the Golgi to ER traffic (GET) complex, which is composed of GET1, GET2 and GET3. Within the complex, GET1 and GET2 form a heterotetramer which is stabilized by phosphatidylinositol binding and which binds to the GET3 homodimer.

Its subcellular location is the endoplasmic reticulum membrane. It localises to the golgi apparatus membrane. Functionally, required for the post-translational delivery of tail-anchored (TA) proteins to the endoplasmic reticulum. Together with GET2, acts as a membrane receptor for soluble GET3, which recognizes and selectively binds the transmembrane domain of TA proteins in the cytosol. The GET complex cooperates with the HDEL receptor ERD2 to mediate the ATP-dependent retrieval of resident ER proteins that contain a C-terminal H-D-E-L retention signal from the Golgi to the ER. The protein is Golgi to ER traffic protein 1 of Candida albicans (strain WO-1) (Yeast).